The sequence spans 291 residues: G1/S-specific cyclin-D2 (291 aa).

Positions 264–291 (QQQQSNPSKTIEELDQASTPTDVRDINL) are disordered. Threonine 282 is modified (phosphothreonine).

Belongs to the cyclin family. Cyclin D subfamily. In terms of assembly, interacts with the CDK4 and CDK6 protein kinases to form a serine/threonine kinase holoenzyme complex. The cyclin subunit imparts substrate specificity to the complex. Phosphorylation at Thr-282 by MAP kinases is required for ubiquitination and degradation by the DCX(AMBRA1) complex. In terms of processing, ubiquitinated by the DCX(AMBRA1) complex during the transition from G1 to S cell phase, leading to its degradation: ubiquitination is dependent on Thr-282 phosphorylation. The DCX(AMBRA1) complex represents the major regulator of CCND2 stability during the G1/S transition.

It is found in the nucleus. Its subcellular location is the cytoplasm. It localises to the nucleus membrane. Functionally, regulatory component of the cyclin D2-CDK4 (DC) complex that phosphorylates and inhibits members of the retinoblastoma (RB) protein family including RB1 and regulates the cell-cycle during G(1)/S transition. Phosphorylation of RB1 allows dissociation of the transcription factor E2F from the RB/E2F complex and the subsequent transcription of E2F target genes which are responsible for the progression through the G(1) phase. Hypophosphorylates RB1 in early G(1) phase. Cyclin D-CDK4 complexes are major integrators of various mitogenenic and antimitogenic signals. The protein is G1/S-specific cyclin-D2 (CCND2) of Gallus gallus (Chicken).